The primary structure comprises 590 residues: V-type ATP synthase alpha chain (590 aa).

232–239 (GPFGSGKT) contributes to the ATP binding site.

It belongs to the ATPase alpha/beta chains family.

It carries out the reaction ATP + H2O + 4 H(+)(in) = ADP + phosphate + 5 H(+)(out). Produces ATP from ADP in the presence of a proton gradient across the membrane. The V-type alpha chain is a catalytic subunit. This is V-type ATP synthase alpha chain from Thermoanaerobacter sp. (strain X514).